The sequence spans 219 residues: Guanylate kinase (219 aa).

Residues 15-194 (GLMFVLSSPS…AFAEVHSILK (180 aa)) enclose the Guanylate kinase-like domain. 22–29 (SPSGAGKT) contributes to the ATP binding site.

Belongs to the guanylate kinase family.

Its subcellular location is the cytoplasm. It catalyses the reaction GMP + ATP = GDP + ADP. In terms of biological role, essential for recycling GMP and indirectly, cGMP. The polypeptide is Guanylate kinase (Rhodopseudomonas palustris (strain BisB18)).